A 248-amino-acid chain; its full sequence is 2,3-bisphosphoglycerate-dependent phosphoglycerate mutase (248 aa).

Residues Arg8–Asn15, Thr21–Gly22, Arg60, Glu87–Tyr90, Lys98, Arg114–Arg115, and Gly183–Asn184 each bind substrate. Catalysis depends on His9, which acts as the Tele-phosphohistidine intermediate. The active-site Proton donor/acceptor is Glu87.

This sequence belongs to the phosphoglycerate mutase family. BPG-dependent PGAM subfamily.

The enzyme catalyses (2R)-2-phosphoglycerate = (2R)-3-phosphoglycerate. It functions in the pathway carbohydrate degradation; glycolysis; pyruvate from D-glyceraldehyde 3-phosphate: step 3/5. Catalyzes the interconversion of 2-phosphoglycerate and 3-phosphoglycerate. The sequence is that of 2,3-bisphosphoglycerate-dependent phosphoglycerate mutase from Borreliella afzelii (strain PKo) (Borrelia afzelii).